Reading from the N-terminus, the 396-residue chain is MTGFFTFLSFSLAALSVTNAAHILSVPKGAEVVPNGYIVVMKDDTSQQDFSSHRVWISSIHHNKTRRGLDGAGVKQTYDFDHLRGYSGIFDEDTIKDISNDPKVAFVEPDAIISQHVVVQQRKAPWGLSRLSNRRGGRNYVFDSSAGSGVWAYVVDSGVDIRHSEFQGRAVWGSNLVDNKNSDGTGHGTHVAGTIAGKTYGIAKKAKVVAVKVLNSEGKGPTSGIIAGINWSIRHARKHGMLHKSVLNMSLGGTYSAGLNHATAQAIKAGMFVSVSAGNDNINSNGNSPASERSVCTIAASTENDGKASFSNWGPAVDLYAPGHNILSARPGGGSQTMSGTSMAAPHAAGVAAYLIAKEGIPGNRACLRLKQLSQPTIRNPGPDTTSRLLYNGSGR.

The N-terminal stretch at 1 to 20 is a signal peptide; sequence MTGFFTFLSFSLAALSVTNA. The propeptide occupies 21 to 116; it reads AHILSVPKGA…VEPDAIISQH (96 aa). Positions 37-113 constitute an Inhibitor I9 domain; the sequence is YIVVMKDDTS…VAFVEPDAII (77 aa). Residue N63 is glycosylated (N-linked (GlcNAc...) asparagine). In terms of domain architecture, Peptidase S8 spans 125 to 396; sequence PWGLSRLSNR…SRLLYNGSGR (272 aa). Active-site charge relay system residues include D156 and H187. N230 and N248 each carry an N-linked (GlcNAc...) asparagine glycan. S342 acts as the Charge relay system in catalysis. The segment covering 376-389 has biased composition (polar residues); that stretch reads PTIRNPGPDTTSRL. A disordered region spans residues 376 to 396; it reads PTIRNPGPDTTSRLLYNGSGR. An N-linked (GlcNAc...) asparagine glycan is attached at N392.

Belongs to the peptidase S8 family.

It is found in the secreted. Functionally, secreted subtilisin-like serine protease with keratinolytic activity that contributes to pathogenicity. The sequence is that of Subtilisin-like protease 5 (SUB5) from Trichophyton tonsurans (Scalp ringworm fungus).